Consider the following 267-residue polypeptide: Transcription factor Spi-B (267 aa).

Residues 1-31 (MLALEAAQLDGPHLSCLYPEGVFYDLDSCKP) form a TAD1 (Acidic) region. The segment at 41 to 62 (LDSTWGWTEAPPAPAIAPYEAF) is TAD2. Positions 174–257 (LRLYQFLLGL…VKRKLTYQFD (84 aa)) form a DNA-binding region, ETS.

The protein belongs to the ETS family. In terms of assembly, can form homotypic interactions. Interacts with IRF4/Pip. Interacts with JUN. Interacts with TBP. May also interact with CREBBP and EP300. Interacts with NONO/p54(nrb). Expressed in the medulla of the thymus, the spleen and germinal centers of the lymph nodes. Expressed in B-cells and T-cells, expression increases during B-cell maturation and decreases during T-cell maturation.

It is found in the nucleus. Sequence specific transcriptional activator which binds to the PU-box, a purine-rich DNA sequence (5'-GAGGAA-3') that can act as a lymphoid-specific enhancer. Promotes development of plasmacytoid dendritic cells (pDCs), also known as type 2 DC precursors (pre-DC2) or natural interferon (IFN)-producing cells. These cells have the capacity to produce large amounts of interferon and block viral replication. Required for B-cell receptor (BCR) signaling, which is necessary for normal B-cell development and antigenic stimulation. The sequence is that of Transcription factor Spi-B (Spib) from Mus musculus (Mouse).